The sequence spans 866 residues: Retinoblastoma-related protein 2 (866 aa).

Residues 274-475 (TPITSAMTTA…EKGSSLYNSL (202 aa)) form a domain A region. Residues 274–721 (TPITSAMTTA…NEVFVPAAKP (448 aa)) are pocket. A spacer region spans residues 476–593 (IVARPSVASE…PVGGNEKCAD (118 aa)). The disordered stretch occupies residues 513-551 (LPATPSKKRAAGRDDNADPRSPKRPCNESRSPVVEHNLQ). Positions 523-539 (AGRDDNADPRSPKRPCN) are enriched in basic and acidic residues. The segment at 594-721 (VTIQIFFSKI…NEVFVPAAKP (128 aa)) is domain B. 2 disordered regions span residues 731–754 (TRPE…PFPN) and 839–866 (SLGQ…KPDT). Polar residues predominate over residues 841 to 850 (GQPNGGSTSL).

It belongs to the retinoblastoma protein (RB) family. As to expression, ubiquitous.

The protein resides in the nucleus. In terms of biological role, regulator of biological processes that recruits a histone deacetylase to control gene transcription. May play a role in the entry into mitosis, negatively regulating the cell proliferation. Formation of stable complexes with geminiviridae replication-associated proteins may create a cellular environment which favors viral DNA replication. This Zea mays (Maize) protein is Retinoblastoma-related protein 2 (RBR2).